The following is a 242-amino-acid chain: Uridylate kinase (242 aa).

Position 15–18 (15–18) interacts with ATP; the sequence is KLSG. Residue G57 coordinates UMP. ATP contacts are provided by G58 and R62. Residues D78 and 139–146 contribute to the UMP site; that span reads TGNPFFTT. 3 residues coordinate ATP: T166, Y172, and D175.

The protein belongs to the UMP kinase family. As to quaternary structure, homohexamer.

Its subcellular location is the cytoplasm. The catalysed reaction is UMP + ATP = UDP + ADP. It participates in pyrimidine metabolism; CTP biosynthesis via de novo pathway; UDP from UMP (UMPK route): step 1/1. Its activity is regulated as follows. Inhibited by UTP. Catalyzes the reversible phosphorylation of UMP to UDP. This Acinetobacter baylyi (strain ATCC 33305 / BD413 / ADP1) protein is Uridylate kinase.